A 155-amino-acid polypeptide reads, in one-letter code: Mediator of RNA polymerase II transcription subunit 21 (155 aa).

The interval 29–73 (QAPPSVPPGQHRVDTMPEIKGKAASENPQSNPPQPAEPPVPEKIS) is disordered. Over residues 39 to 51 (HRVDTMPEIKGKA) the composition is skewed to basic and acidic residues. The segment covering 58 to 69 (SNPPQPAEPPVP) has biased composition (pro residues). Residues 75–147 (EQFNQDLKEF…EVLLKKVEDK (73 aa)) are a coiled coil.

It belongs to the Mediator complex subunit 21 family. Component of the Mediator complex.

The protein localises to the nucleus. Component of the Mediator complex, a coactivator involved in the regulated transcription of nearly all RNA polymerase II-dependent genes. Mediator functions as a bridge to convey information from gene-specific regulatory proteins to the basal RNA polymerase II transcription machinery. Mediator is recruited to promoters by direct interactions with regulatory proteins and serves as a scaffold for the assembly of a functional preinitiation complex with RNA polymerase II and the general transcription factors. The polypeptide is Mediator of RNA polymerase II transcription subunit 21 (SRB7) (Phaeosphaeria nodorum (strain SN15 / ATCC MYA-4574 / FGSC 10173) (Glume blotch fungus)).